Consider the following 279-residue polypeptide: Protein PHOTOPERIODIC CONTROL OF HYPOCOTYL 1-LIKE (279 aa).

Interacts with light-activated phyB. Binds directly to PIF1 and COP1. Ubiquitinated by COP1 in darkness; this leads to proteasomal degradation. As to expression, mainly expressed in cotyledons, hypocotyls, leaves.

Its subcellular location is the nucleus. In terms of biological role, together with PCH1, regulates growth and development adaptation to the ambient environment by controlling negatively phytochrome B (phyB) dark reversion, a temperature-dependent thermal relaxation process during which phyB reverts from the active to the inactive state. Contributes to red (R) light-triggered photomorphogenesis. Promotes various light responses such as seed germination, hypocotyl gravitropism and chlorophyll biosynthesis, via direct interaction with PIF1 and COP1. Prevents DNA-binding ability of PIF1 to negatively regulate the expressions of its target genes. Facilitates the physical interaction between phyB and PIF1 and the subsequent light-induced degradation of PIF1. The protein is Protein PHOTOPERIODIC CONTROL OF HYPOCOTYL 1-LIKE of Arabidopsis thaliana (Mouse-ear cress).